We begin with the raw amino-acid sequence, 1461 residues long: MALSVDSSWHRWQWRVRDGFPHCPSETTPLLSPEKGRQSYNLTQQRVVFPNNSIFHQDWEEVSRRYPGNRTCTTKYTLFTFLPRNLFEQFHRWANLYFLFLVILNWMPSMEVFHREITMLPLAIVLFVIMIKDGMEDFKRHRFDKAINCSNIRIYERKEQTYVQKCWKDVRVGDFIQMKCNEIVPADILLLFSSDPNGICHLETASLDGETNLKQRCVVKGFSQQEVQFEPELFHNTIVCEKPNNHLNKFKGYMEHPDQTRTGFGCESLLLRGCTIRNTEMAVGIVIYAGHETKAMLNNSGPRYKRSKIERRMNIDIFFCIGILILMCLIGAVGHSIWNGTFEEHPPFDVPDANGSFLPSALGGFYMFLTMIILLQVLIPISLYVSIELVKLGQVFFLSNDLDLYDEETDLSIQCRALNIAEDLGQIQYIFSDKTGTLTENKMVFRRCTIMGSEYSHQENAKRLETPKELDSDGEEWTQYQCLSFSARWAQDPATMRSQKGAQPLRRSQSARVPIQGHYRQRSMGHRESSQPPVAFSSSIEKDVTPDKNLLTKVRDAALWLETLSDSRPAKASLSTTSSIADFFLALTICNSVMVSTTTEPRQRVTIKPSSKALGTSLEKIQQLFQKLKLLSLSQSFSSTAPSDTDLGESLGANVATTDSDERDDASVCSGGDSTDDGGYRSSMWDQGDILESGSGTSLEEALEAPATDLARPEFCYEAESPDEAALVHAAHAYSFTLVSRTPEQVTVRLPQGTCLTFSLLCTLGFDSVRKRMSVVVRHPLTGEIVVYTKGADSVIMDLLEDPACVPDINMEKKLRKIRARTQKHLDLYARDGLRTLCIAKKVVSEEDFRRWASFRREAEASLDNRDELLMETAQHLENQLTLLGATGIEDRLQEGVPDTIATLREAGIQLWVLTGDKQETAVNIAHSCRLLNQTDTVYTINTENQETCESILNCALEELKQFRELQKPDRKLFGFRLPSKTPSITSEAVVPEAGLVIDGKTLNAIFQGKLEKKFLELTQYCRSVLCCRSTPLQKSMIVKLVRDKLRVMTLSIGDGANDVSMIQAADIGIGISGQEGMQAVMSSDFAITRFKHLKKLLLVHGHWCYSRLARMVVYYLYKNVCYVNLLFWYQFFCGFSSSTMIDYWQMIFFNLFFTSLPPLVFGVLDKDISAETLLALPELYKSGQNSECYNLSTFWISMVDAFYQSLICFFIPYLAYKGSDIDVFTFGTPINTISLTTILLHQAMEMKTWTIFHGVVLLGSFLMYFLVSLLYNATCVICNSPTNPYWVMEGQLSNPTFYLVCFLTPVVALLPRYFFLSLQGTCGKSLISKAQKIDKLPPDKRNLEIQSWRSRQRPAPVPEVARPTHHPVSSITGQDFSASTPKSSNPPKRKHVEESVLHEQRCGTECMRDDSCSGDSSAQLSSGEHLLGPNRIMAYSRGQTDMCRCSKRSSHRRSQSSLTI.

The Cytoplasmic portion of the chain corresponds to 1 to 82 (MALSVDSSWH…TTKYTLFTFL (82 aa)). The helical transmembrane segment at 83–104 (PRNLFEQFHRWANLYFLFLVIL) threads the bilayer. Residues 105 to 110 (NWMPSM) lie on the Exoplasmic loop side of the membrane. Residues 111 to 132 (EVFHREITMLPLAIVLFVIMIK) form a helical membrane-spanning segment. The Cytoplasmic portion of the chain corresponds to 133 to 316 (DGMEDFKRHR…SKIERRMNID (184 aa)). The chain crosses the membrane as a helical span at residues 317-338 (IFFCIGILILMCLIGAVGHSIW). Over 339-368 (NGTFEEHPPFDVPDANGSFLPSALGGFYMF) the chain is Exoplasmic loop. Residues 369-390 (LTMIILLQVLIPISLYVSIELV) form a helical membrane-spanning segment. Residues 391–1111 (KLGQVFFLSN…GHWCYSRLAR (721 aa)) are Cytoplasmic-facing. Asp433 serves as the catalytic 4-aspartylphosphate intermediate. ATP-binding residues include Asp433, Lys434, and Thr435. Asp433 contacts Mg(2+). Thr435 lines the Mg(2+) pocket. Polar residues-rich tracts occupy residues 496-511 (MRSQKGAQPLRRSQSA) and 530-539 (SQPPVAFSSS). Disordered stretches follow at residues 496–541 (MRSQ…SSIE) and 640–687 (TAPS…MWDQ). Residues Glu724, Phe766, Lys790, Arg835, Thr915, Gly916, Asp917, Arg1029, and Lys1035 each coordinate ATP. Asp1055 contributes to the Mg(2+) binding site. Asn1058 and Asp1059 together coordinate ATP. Asp1059 lines the Mg(2+) pocket. A helical membrane pass occupies residues 1112–1132 (MVVYYLYKNVCYVNLLFWYQF). Topologically, residues 1133–1144 (FCGFSSSTMIDY) are exoplasmic loop. The chain crosses the membrane as a helical span at residues 1145 to 1164 (WQMIFFNLFFTSLPPLVFGV). Over 1165–1194 (LDKDISAETLLALPELYKSGQNSECYNLST) the chain is Cytoplasmic. The helical transmembrane segment at 1195–1216 (FWISMVDAFYQSLICFFIPYLA) threads the bilayer. Residues 1217 to 1223 (YKGSDID) are Exoplasmic loop-facing. The helical transmembrane segment at 1224-1246 (VFTFGTPINTISLTTILLHQAME) threads the bilayer. At 1247-1252 (MKTWTI) the chain is on the cytoplasmic side. The chain crosses the membrane as a helical span at residues 1253-1273 (FHGVVLLGSFLMYFLVSLLYN). At 1274–1291 (ATCVICNSPTNPYWVMEG) the chain is on the exoplasmic loop side. The chain crosses the membrane as a helical span at residues 1292–1316 (QLSNPTFYLVCFLTPVVALLPRYFF). Residues 1317 to 1461 (LSLQGTCGKS…HRRSQSSLTI (145 aa)) are Cytoplasmic-facing. Residues 1346-1397 (IQSWRSRQRPAPVPEVARPTHHPVSSITGQDFSASTPKSSNPPKRKHVEESV) form a disordered region. Polar residues predominate over residues 1368–1387 (PVSSITGQDFSASTPKSSNP).

It belongs to the cation transport ATPase (P-type) (TC 3.A.3) family. Type IV subfamily. Component of a P4-ATPase flippase complex which consists of a catalytic alpha subunit ATP10B and an accessory beta subunit TMEM30A. Mg(2+) serves as cofactor. Post-translationally, autophosphorylated at the conserved aspartate of the P-type ATPase signature sequence. In terms of tissue distribution, expressed in predominantly in brain structures including medulla oblongata, substantia nigra and basal ganglia. Expressed in the gastrointestinal system with highest levels in the small intestine and colon. Also expressed at low levels in testis and thymus.

Its subcellular location is the late endosome membrane. It localises to the lysosome membrane. The protein localises to the endoplasmic reticulum membrane. It carries out the reaction ATP + H2O + phospholipidSide 1 = ADP + phosphate + phospholipidSide 2.. The catalysed reaction is a beta-D-glucosyl-(1&lt;-&gt;1')-N-acylsphing-4-enine(out) + ATP + H2O = a beta-D-glucosyl-(1&lt;-&gt;1')-N-acylsphing-4-enine(in) + ADP + phosphate + H(+). Functionally, catalytic component of a P4-ATPase flippase complex, which catalyzes the hydrolysis of ATP coupled to the transport of glucosylceramide (GlcCer) from the outer to the inner leaflet of lysosome membranes. Plays an important role in the maintenance of lysosome membrane integrity and function in cortical neurons. This is Phospholipid-transporting ATPase VB from Homo sapiens (Human).